Consider the following 422-residue polypeptide: Serpin A11 (422 aa).

A signal peptide spans 1 to 24 (MGPVWLWLLIAELLLPVHYQPSSA). The disordered stretch occupies residues 25–45 (HGDKSLGAPQPASHQSLEPAP). N-linked (GlcNAc...) asparagine glycans are attached at residues asparagine 106, asparagine 169, asparagine 350, and asparagine 385.

This sequence belongs to the serpin family.

Its subcellular location is the secreted. This Rattus norvegicus (Rat) protein is Serpin A11 (Serpina11).